The chain runs to 315 residues: Cross-pathway control WD-repeat protein 2 (315 aa).

7 WD repeats span residues 14-54 (GHKG…DSYG), 62-101 (GHNH…TTRR), 104-144 (GHTS…YDIK), 147-188 (CHTE…LKTN), 191-230 (GHTG…HLYS), 232-270 (EAGD…IVDE), and 282-315 (GRQP…TVTS).

This sequence belongs to the WD repeat G protein beta family. Ribosomal protein RACK1 subfamily.

Functionally, component of the ribosome, a large ribonucleoprotein complex responsible for the synthesis of proteins in the cell. The small ribosomal subunit (SSU) binds messenger RNAs (mRNAs) and translates the encoded message by selecting cognate aminoacyl-transfer RNA (tRNA) molecules. The large subunit (LSU) contains the ribosomal catalytic site termed the peptidyl transferase center (PTC), which catalyzes the formation of peptide bonds, thereby polymerizing the amino acids delivered by tRNAs into a polypeptide chain. The nascent polypeptides leave the ribosome through a tunnel in the LSU and interact with protein factors that function in enzymatic processing, targeting, and the membrane insertion of nascent chains at the exit of the ribosomal tunnel. Plays in important role in the regulation of vegetative growth and fruiting body development. Especially, positively regulates the expression of genes involved in fruiting body development such as FVFD30 and FVFD16, as well as genes encoding for lectins and hydrophobins. Also regulates the expression of genes involved in cAMP signaling pathway. The chain is Cross-pathway control WD-repeat protein 2 from Flammulina velutipes (Agaricus velutipes).